Consider the following 554-residue polypeptide: Glucose-6-phosphate isomerase (554 aa).

Glu-359 acts as the Proton donor in catalysis. Residues His-390 and Lys-518 contribute to the active site.

This sequence belongs to the GPI family.

It is found in the cytoplasm. It carries out the reaction alpha-D-glucose 6-phosphate = beta-D-fructose 6-phosphate. Its pathway is carbohydrate biosynthesis; gluconeogenesis. It functions in the pathway carbohydrate degradation; glycolysis; D-glyceraldehyde 3-phosphate and glycerone phosphate from D-glucose: step 2/4. Functionally, catalyzes the reversible isomerization of glucose-6-phosphate to fructose-6-phosphate. The polypeptide is Glucose-6-phosphate isomerase (Pseudomonas fluorescens).